The chain runs to 341 residues: Serine proteinase inhibitor 2 (341 aa).

Belongs to the serpin family. Poxviruses subfamily.

It localises to the host cytoplasm. In terms of biological role, viral serpin that inhibits both cysteine and serine proteinases involved in the regulation of host inflammatory and apoptosis processes. Major anti-apoptotic protein which inhibits both intrinsic and extrinsic pathways and strongly cleaves host CASP1 and CASP8 but is a rather poor inhibitor of host CASP3. Prevents the proteolytic activity of host interleukin-1-beta converting enzyme (ICE) and ICE-like enzymes. Can also block apoptosis through host tumor necrosis factor (TNF) receptor. The protein is Serine proteinase inhibitor 2 (OPG199) of Bos taurus (Bovine).